The following is a 338-amino-acid chain: Ketol-acid reductoisomerase (NADP(+)) (338 aa).

A KARI N-terminal Rossmann domain is found at 1–181; sequence MKVFYDNDAD…GGTRAGVIET (181 aa). Residues 24–27, arginine 47, serine 50, serine 52, and 82–85 contribute to the NADP(+) site; these read YGSQ and DEGQ. The active site involves histidine 107. Glycine 133 is a binding site for NADP(+). In terms of domain architecture, KARI C-terminal knotted spans 182-327; it reads SFREETETDL…SKLRSMMTWI (146 aa). Mg(2+) is bound by residues aspartate 190, glutamate 194, glutamate 226, and glutamate 230. Serine 251 contacts substrate.

The protein belongs to the ketol-acid reductoisomerase family. Mg(2+) is required as a cofactor.

It carries out the reaction (2R)-2,3-dihydroxy-3-methylbutanoate + NADP(+) = (2S)-2-acetolactate + NADPH + H(+). The enzyme catalyses (2R,3R)-2,3-dihydroxy-3-methylpentanoate + NADP(+) = (S)-2-ethyl-2-hydroxy-3-oxobutanoate + NADPH + H(+). It functions in the pathway amino-acid biosynthesis; L-isoleucine biosynthesis; L-isoleucine from 2-oxobutanoate: step 2/4. It participates in amino-acid biosynthesis; L-valine biosynthesis; L-valine from pyruvate: step 2/4. Its function is as follows. Involved in the biosynthesis of branched-chain amino acids (BCAA). Catalyzes an alkyl-migration followed by a ketol-acid reduction of (S)-2-acetolactate (S2AL) to yield (R)-2,3-dihydroxy-isovalerate. In the isomerase reaction, S2AL is rearranged via a Mg-dependent methyl migration to produce 3-hydroxy-3-methyl-2-ketobutyrate (HMKB). In the reductase reaction, this 2-ketoacid undergoes a metal-dependent reduction by NADPH to yield (R)-2,3-dihydroxy-isovalerate. This chain is Ketol-acid reductoisomerase (NADP(+)), found in Acidithiobacillus ferrooxidans (strain ATCC 23270 / DSM 14882 / CIP 104768 / NCIMB 8455) (Ferrobacillus ferrooxidans (strain ATCC 23270)).